The sequence spans 66 residues: Putative alpha-neurotoxin RjAa44 (66 aa).

One can recognise an LCN-type CS-alpha/beta domain in the interval lysine 1–arginine 60. 4 disulfides stabilise this stretch: cysteine 11/cysteine 59, cysteine 15/cysteine 35, cysteine 21/cysteine 42, and cysteine 25/cysteine 44.

The protein belongs to the long (4 C-C) scorpion toxin superfamily. Sodium channel inhibitor family. Alpha subfamily. In terms of tissue distribution, expressed by the venom gland.

Its subcellular location is the secreted. Its function is as follows. Alpha toxins bind voltage-independently at site-3 of sodium channels (Nav) and inhibit the inactivation of the activated channels, thereby blocking neuronal transmission. The polypeptide is Putative alpha-neurotoxin RjAa44 (Rhopalurus junceus (Caribbean blue scorpion)).